Consider the following 450-residue polypeptide: Phosphoglucosamine mutase (450 aa).

Residue Ser101 is the Phosphoserine intermediate of the active site. Mg(2+)-binding residues include Ser101, Asp241, Asp243, and Asp245. Position 101 is a phosphoserine (Ser101).

This sequence belongs to the phosphohexose mutase family. Requires Mg(2+) as cofactor. Activated by phosphorylation.

The enzyme catalyses alpha-D-glucosamine 1-phosphate = D-glucosamine 6-phosphate. Its function is as follows. Catalyzes the conversion of glucosamine-6-phosphate to glucosamine-1-phosphate. This chain is Phosphoglucosamine mutase, found in Ligilactobacillus salivarius (strain UCC118) (Lactobacillus salivarius).